The following is a 185-amino-acid chain: NOP protein chaperone 1 (185 aa).

Residues 1-40 (MEVHGKPKASPSCSSPTRDSSGVPVSKELLTAGSDGRGGI) are disordered. Residues 10–21 (SPSCSSPTRDSS) are compositionally biased toward low complexity. A phosphoserine mark is found at Ser34 and Ser66. The disordered stretch occupies residues 118–185 (FEMNQSDSKE…LDSPASKKKK (68 aa)). Over residues 143-152 (SESEDEDDSI) the composition is skewed to acidic residues. Phosphoserine is present on Ser178.

Interacts with NOP58, RUVBL1 and RUVBL2; the interactions are direct and NOPCHAP1 bridges the association of NOP58 with RUVBL1:RUVBL2 even in absence of snoRNAs. The interactions with RUVBL1 and RUVBL2 are disrupted upon ATP binding.

It is found in the nucleus. In terms of biological role, client-loading PAQosome/R2TP complex cofactor that selects NOP58 to promote box C/D small nucleolar ribonucleoprotein (snoRNP) assembly. Acts as a bridge between NOP58 and the R2TP complex via RUVBL1:RUVBL2. The polypeptide is NOP protein chaperone 1 (Homo sapiens (Human)).